Reading from the N-terminus, the 1168-residue chain is Myosin IC heavy chain (1168 aa).

Residues 7–666 (HGVDDMVMLT…SVFSLEELRD (660 aa)) form the Myosin motor domain. Residue 101–108 (GESGAGKT) coordinates ATP. The residue at position 311 (serine 311) is a Phosphoserine. The actin-binding stretch occupies residues 542–564 (INILVATLSKCTPHYIRCIKPNE). In terms of domain architecture, TH1 spans 704-892 (KERRRLSLER…KVSVAPGLPP (189 aa)). 3 disordered regions span residues 876–909 (DGKV…GGAS), 921–978 (ILGA…APGP), and 1036–1168 (AAAP…PPGM). Polar residues predominate over residues 895–909 (APNIQAPQETSGGAS). 2 stretches are compositionally biased toward gly residues: residues 924–939 (AKGG…GGPS) and 950–959 (PGGGGGGPSP). Residues 960–978 (FGGRPSPSGPPAAASAPGP) are compositionally biased toward low complexity. The SH3 domain occupies 976 to 1035 (PGPEQARALYDFAAENPDELTFNEGAVVTVINKSNPDWWEGELNGQRGVFPASYVELIPR). Residues 1040 to 1052 (APGPSGGPRPAPP) show a composition bias toward pro residues. 2 stretches are compositionally biased toward gly residues: residues 1063-1083 (GGPG…GRGG) and 1090-1099 (GRAGPPGGRG). A compositionally biased stretch (low complexity) spans 1100-1112 (MPAPGGAAPRGRG). A compositionally biased stretch (gly residues) spans 1120–1141 (GPPGGGRGGAPPPGGMRGRGGP). Low complexity predominate over residues 1152 to 1161 (GGMMPPRGRA).

The protein belongs to the TRAFAC class myosin-kinesin ATPase superfamily. Myosin family. As to quaternary structure, myosin I heavy chain is single-headed. Dimer of a heavy and a light chain. Inability to self-assemble into filaments.

Myosin is a protein that binds to F-actin and has ATPase activity that is activated by F-actin. The chain is Myosin IC heavy chain (MIC) from Acanthamoeba castellanii (Amoeba).